We begin with the raw amino-acid sequence, 673 residues long: DNA ligase (673 aa).

NAD(+)-binding positions include 38–42, 87–88, and Glu-119; these read DSVYD and SL. Lys-121 serves as the catalytic N6-AMP-lysine intermediate. Arg-142, Glu-179, Lys-296, and Lys-320 together coordinate NAD(+). Cys-414, Cys-417, Cys-432, and Cys-438 together coordinate Zn(2+). Residues 595-673 form the BRCT domain; it reads VVKSEIAGKT…EEAFLKLLKS (79 aa).

This sequence belongs to the NAD-dependent DNA ligase family. LigA subfamily. Mg(2+) serves as cofactor. Requires Mn(2+) as cofactor.

It carries out the reaction NAD(+) + (deoxyribonucleotide)n-3'-hydroxyl + 5'-phospho-(deoxyribonucleotide)m = (deoxyribonucleotide)n+m + AMP + beta-nicotinamide D-nucleotide.. Its function is as follows. DNA ligase that catalyzes the formation of phosphodiester linkages between 5'-phosphoryl and 3'-hydroxyl groups in double-stranded DNA using NAD as a coenzyme and as the energy source for the reaction. It is essential for DNA replication and repair of damaged DNA. The chain is DNA ligase from Coxiella burnetii (strain CbuK_Q154) (Coxiella burnetii (strain Q154)).